The sequence spans 158 residues: Transcription antitermination protein NusB (158 aa).

The segment covering M1 to G12 has biased composition (basic and acidic residues). A disordered region spans residues M1 to R20.

Belongs to the NusB family.

In terms of biological role, involved in transcription antitermination. Required for transcription of ribosomal RNA (rRNA) genes. Binds specifically to the boxA antiterminator sequence of the ribosomal RNA (rrn) operons. In Nitrosospira multiformis (strain ATCC 25196 / NCIMB 11849 / C 71), this protein is Transcription antitermination protein NusB.